Reading from the N-terminus, the 278-residue chain is Elongation factor Ts (278 aa).

The involved in Mg(2+) ion dislocation from EF-Tu stretch occupies residues 80 to 83 (TDFV).

Belongs to the EF-Ts family.

It is found in the cytoplasm. Associates with the EF-Tu.GDP complex and induces the exchange of GDP to GTP. It remains bound to the aminoacyl-tRNA.EF-Tu.GTP complex up to the GTP hydrolysis stage on the ribosome. This chain is Elongation factor Ts, found in Arthrobacter sp. (strain FB24).